We begin with the raw amino-acid sequence, 131 residues long: D-ribose pyranase (131 aa).

His20 serves as the catalytic Proton donor. Substrate-binding positions include Asp28, His98, and 120–122 (FSN).

The protein belongs to the RbsD / FucU family. RbsD subfamily. As to quaternary structure, homodecamer.

The protein resides in the cytoplasm. It catalyses the reaction beta-D-ribopyranose = beta-D-ribofuranose. It participates in carbohydrate metabolism; D-ribose degradation; D-ribose 5-phosphate from beta-D-ribopyranose: step 1/2. In terms of biological role, catalyzes the interconversion of beta-pyran and beta-furan forms of D-ribose. In Levilactobacillus brevis (strain ATCC 367 / BCRC 12310 / CIP 105137 / JCM 1170 / LMG 11437 / NCIMB 947 / NCTC 947) (Lactobacillus brevis), this protein is D-ribose pyranase.